A 1103-amino-acid polypeptide reads, in one-letter code: Ubiquitin carboxyl-terminal hydrolase 7 (1103 aa).

Positions 1–11 are enriched in low complexity; sequence MNHQQQQQQQQ. A disordered region spans residues 1-40; the sequence is MNHQQQQQQQQKAGEQQLSEPEDMEMEAGDTDDPPRITQN. The interval 1-209 is interaction with TSPYL5; the sequence is MNHQQQQQQQ…APHGVAWDSK (209 aa). Serine 19 carries the post-translational modification Phosphoserine. Positions 20–32 are enriched in acidic residues; the sequence is EPEDMEMEAGDTD. Phosphoserine is present on residues serine 50 and serine 54. The interval 54–209 is interaction with p53/TP53 and MDM2; sequence SNAEEDMEDD…APHGVAWDSK (156 aa). Residues 69-196 form the MATH domain; the sequence is EATFQFTVER…DDKVTFEVFV (128 aa). The necessary for nuclear localization stretch occupies residues 71-206; the sequence is TFQFTVERFS…QADAPHGVAW (136 aa). The 308-residue stretch at 215 to 522 folds into the USP domain; the sequence is VGLKNQGATC…NAYMLVYIRE (308 aa). Catalysis depends on cysteine 224, which acts as the Nucleophile. Catalysis depends on histidine 465, which acts as the Proton acceptor. The residue at position 870 (lysine 870) is an N6-acetyllysine; alternate. Lysine 870 participates in a covalent cross-link: Glycyl lysine isopeptide (Lys-Gly) (interchain with G-Cter in SUMO2); alternate. Lysine 870 participates in a covalent cross-link: Glycyl lysine isopeptide (Lys-Gly) (interchain with G-Cter in ubiquitin); alternate. A Glycyl lysine isopeptide (Lys-Gly) (interchain with G-Cter in SUMO2) cross-link involves residue lysine 883. Serine 964 is modified (phosphoserine). N6-acetyllysine is present on residues lysine 1085 and lysine 1097.

It belongs to the peptidase C19 family. As to quaternary structure, monomer. Homodimer. Part of a complex with DAXX, MDM2, RASSF1 and USP7. Part of a complex with DAXX, MDM2 and USP7. Interacts with MDM2; the interaction is independent of p53/TP53. Interacts with DAXX; the interaction is direct and independent of MDM2 and p53/TP53. Component of a complex composed of KMT2E, OGT and USP7; the complex stabilizes KMT2E, preventing KMT2E ubiquitination and proteasomal-mediated degradation. Interacts (via MATH domain) with KMT2E. Interacts with OGT. Interacts with FOXO4; the interaction is enhanced in presence of hydrogen peroxide and occurs independently of p53/TP53. Interacts with p53/TP53; the interaction is enhanced in response to DNA damage; the interaction is impaired by TSPYL5. Interacts with PTEN; the interaction is direct. Interacts with ATXN1 and the strength of interaction is influenced by the length of the poly-Gln region in ATXN1. A weaker interaction seen with mutants having longer poly-Gln regions. Interacts with KIAA1530/UVSSA. Interacts with MEX3C and antagonizes its ability to degrade mRNA. Interacts with DNMT1 and UHRF1. Interacts with FOXP3. Interacts (via MATH domain) with RNF220. Associated component of the Polycomb group (PcG) multiprotein PRC1-like complex. Interacts with EPOP. Interacts with OTUD4 and USP9X; the interaction is direct. Interacts with CRY2. Interacts with REST. Interacts with ERCC6. Part of a complex consisting of USP7, MAGEL2 and TRIM27; directly interacts with MAGEL2; directly interacts with TRIM27. Polyneddylated. In terms of processing, not sumoylated. Post-translationally, ubiquitinated at Lys-870. Polyubiquitinated. In terms of tissue distribution, strongly expressed in the testis, spleen and brain. Weakly expressed in the stomach, small intestine, skeletal muscle and uterus.

It localises to the nucleus. It is found in the cytoplasm. Its subcellular location is the PML body. The protein resides in the chromosome. It carries out the reaction Thiol-dependent hydrolysis of ester, thioester, amide, peptide and isopeptide bonds formed by the C-terminal Gly of ubiquitin (a 76-residue protein attached to proteins as an intracellular targeting signal).. In terms of biological role, hydrolase that deubiquitinates target proteins such as ARMC5, FOXO4, DEPTOR, KAT5, p53/TP53, MDM2, ERCC6, DNMT1, UHRF1, PTEN, KMT2E/MLL5 and DAXX. Together with DAXX, prevents MDM2 self-ubiquitination and enhances the E3 ligase activity of MDM2 towards p53/TP53, thereby promoting p53/TP53 ubiquitination and proteasomal degradation. Deubiquitinates p53/TP53, preventing degradation of p53/TP53, and enhances p53/TP53-dependent transcription regulation, cell growth repression and apoptosis. Deubiquitinates p53/TP53 and MDM2 and strongly stabilizes p53/TP53 even in the presence of excess MDM2, and also induces p53/TP53-dependent cell growth repression and apoptosis. Deubiquitination of FOXO4 in presence of hydrogen peroxide is not dependent on p53/TP53 and inhibits FOXO4-induced transcriptional activity. In association with DAXX, is involved in the deubiquitination and translocation of PTEN from the nucleus to the cytoplasm, both processes that are counteracted by PML. Deubiquitinates KMT2E preventing KMT2E proteasomal-mediated degradation. Involved in cell proliferation during early embryonic development. Involved in transcription-coupled nucleotide excision repair (TC-NER) in response to UV damage: recruited to DNA damage sites following interaction with KIAA1530/UVSSA and promotes deubiquitination of ERCC6, preventing UV-induced degradation of ERCC6. Involved in maintenance of DNA methylation via its interaction with UHRF1 and DNMT1: acts by mediating deubiquitination of UHRF1 and DNMT1, preventing their degradation and promoting DNA methylation by DNMT1. Deubiquitinates alkylation repair enzyme ALKBH3. OTUD4 recruits USP7 and USP9X to stabilize ALKBH3, thereby promoting the repair of alkylated DNA lesions. Acts as a chromatin regulator via its association with the Polycomb group (PcG) multiprotein PRC1-like complex; may act by deubiquitinating components of the PRC1-like complex. Able to mediate deubiquitination of histone H2B; it is however unsure whether this activity takes place in vivo. Exhibits a preference towards 'Lys-48'-linked ubiquitin chains. Increases regulatory T-cells (Treg) suppressive capacity by deubiquitinating and stabilizing transcription factor FOXP3 which is crucial for Treg cell function. Plays a role in the maintenance of the circadian clock periodicity via deubiquitination and stabilization of the CRY1 and CRY2 proteins. Deubiquitinates REST, thereby stabilizing REST and promoting the maintenance of neural progenitor cells. Deubiquitinates SIRT7, inhibiting SIRT7 histone deacetylase activity and regulating gluconeogenesis. Involved in the regulation of WASH-dependent actin polymerization at the surface of endosomes and the regulation of endosomal protein recycling. It maintains optimal WASH complex activity and precise F-actin levels via deubiquitination of TRIM27 and WASHC1. Mediates the deubiquitination of phosphorylated DEPTOR, promoting its stability and leading to decreased mTORC1 signaling. The protein is Ubiquitin carboxyl-terminal hydrolase 7 (Usp7) of Rattus norvegicus (Rat).